A 378-amino-acid chain; its full sequence is RNA polymerase sigma factor SigA (378 aa).

Residues M1 to N29 are disordered. A sigma-70 factor domain-2 region spans residues L145–T215. Residues D169–Q172 carry the Interaction with polymerase core subunit RpoC motif. The interval E224–A300 is sigma-70 factor domain-3. Positions I313–H366 are sigma-70 factor domain-4. The segment at residues L339 to A358 is a DNA-binding region (H-T-H motif).

This sequence belongs to the sigma-70 factor family. RpoD/SigA subfamily. Interacts transiently with the RNA polymerase catalytic core.

It is found in the cytoplasm. Its function is as follows. Sigma factors are initiation factors that promote the attachment of RNA polymerase to specific initiation sites and are then released. This sigma factor is the primary sigma factor during exponential growth. This Clostridium acetobutylicum (strain ATCC 824 / DSM 792 / JCM 1419 / IAM 19013 / LMG 5710 / NBRC 13948 / NRRL B-527 / VKM B-1787 / 2291 / W) protein is RNA polymerase sigma factor SigA.